The following is a 502-amino-acid chain: MQTDCDVLIAGNGLAALTLALSLPESFRIVILCKNRLDDTASRHAQGGIAAAWSGEDDIEKHVADTLEAGAGLCDEAAVRAILSQGKPAIEWLLAQGVAFDRNHNGLHLTREGGHTCRRIAHVADYTGEAVMQSLIAQIRRRPNIRVCERQMALDIQTESGAACGLTVLDCRTQETYRIRARHTVLAGGGLGQIYAATTTPPECTGDAIAMAIRAGCAVGNLEFIQFHPTGLARPSENGRTFLISEAVRGEGGILTNQAGERFMPHYDRRAELAPRDIVARAIAAEIAKQTQDFVSLDISHQPAAFVRRHFPSIHRHCLSQCGLDITRQAIPVRPVQHYTCGGIQTDPCGRTSLPQLYALGETACTGLHGANRLASNSLLECVVTARLCAQAIADGQAFQAEPFQRPSESLSAEAGIFSDDLQNTFSRPVLQTFNQRHLGILRNDTGLRRAIAQLQLWKQNQAEPHTASEYENRNLLECSLAVAQAAYRRRQNIGAHFNSDC.

Residues 12 to 15 (NGLA), lysine 34, 41 to 48 (ASRHAQGG), and aspartate 207 each bind FAD. Arginine 276 functions as the Proton donor/acceptor in the catalytic mechanism. FAD-binding positions include glutamate 362 and 378–379 (SL).

Belongs to the FAD-dependent oxidoreductase 2 family. NadB subfamily. The cofactor is FAD.

The protein resides in the cytoplasm. The enzyme catalyses L-aspartate + O2 = iminosuccinate + H2O2. Its pathway is cofactor biosynthesis; NAD(+) biosynthesis; iminoaspartate from L-aspartate (oxidase route): step 1/1. Functionally, catalyzes the oxidation of L-aspartate to iminoaspartate, the first step in the de novo biosynthesis of NAD(+). In Neisseria meningitidis serogroup B (strain ATCC BAA-335 / MC58), this protein is L-aspartate oxidase (nadB).